Here is a 428-residue protein sequence, read N- to C-terminus: Glutamate-1-semialdehyde 2,1-aminomutase (428 aa).

Lys-265 carries the N6-(pyridoxal phosphate)lysine modification.

This sequence belongs to the class-III pyridoxal-phosphate-dependent aminotransferase family. HemL subfamily. In terms of assembly, homodimer. Pyridoxal 5'-phosphate is required as a cofactor.

The protein localises to the cytoplasm. The catalysed reaction is (S)-4-amino-5-oxopentanoate = 5-aminolevulinate. It participates in porphyrin-containing compound metabolism; protoporphyrin-IX biosynthesis; 5-aminolevulinate from L-glutamyl-tRNA(Glu): step 2/2. In Shewanella loihica (strain ATCC BAA-1088 / PV-4), this protein is Glutamate-1-semialdehyde 2,1-aminomutase.